A 74-amino-acid chain; its full sequence is DNA-directed RNA polymerase subunit omega (74 aa).

The protein belongs to the RNA polymerase subunit omega family. In terms of assembly, the RNAP catalytic core consists of 2 alpha, 1 beta, 1 beta' and 1 omega subunit. When a sigma factor is associated with the core the holoenzyme is formed, which can initiate transcription.

The catalysed reaction is RNA(n) + a ribonucleoside 5'-triphosphate = RNA(n+1) + diphosphate. In terms of biological role, promotes RNA polymerase assembly. Latches the N- and C-terminal regions of the beta' subunit thereby facilitating its interaction with the beta and alpha subunits. In Hydrogenovibrio crunogenus (strain DSM 25203 / XCL-2) (Thiomicrospira crunogena), this protein is DNA-directed RNA polymerase subunit omega.